The sequence spans 356 residues: sn-glycerol-3-phosphate import ATP-binding protein UgpC (356 aa).

One can recognise an ABC transporter domain in the interval 4–235 (LKLQAVTKSW…PASRFVASFI (232 aa)). 37–44 (GPSGCGKS) is a binding site for ATP.

It belongs to the ABC transporter superfamily. sn-glycerol-3-phosphate importer (TC 3.A.1.1.3) family. The complex is composed of two ATP-binding proteins (UgpC), two transmembrane proteins (UgpA and UgpE) and a solute-binding protein (UgpB).

The protein localises to the cell inner membrane. It carries out the reaction sn-glycerol 3-phosphate(out) + ATP + H2O = sn-glycerol 3-phosphate(in) + ADP + phosphate + H(+). In terms of biological role, part of the ABC transporter complex UgpBAEC involved in sn-glycerol-3-phosphate (G3P) import. Responsible for energy coupling to the transport system. The sequence is that of sn-glycerol-3-phosphate import ATP-binding protein UgpC from Salmonella paratyphi A (strain ATCC 9150 / SARB42).